Consider the following 718-residue polypeptide: Polyribonucleotide nucleotidyltransferase (718 aa).

Mg(2+) is bound by residues D493 and D499. The region spanning 560–619 (PRMITIKINPEKIRDVIGKGGSVIRALTEETGTTIDISDDGVVTIASTSSEGMAEAKKRI) is the KH domain. The S1 motif domain occupies 629–697 (GQVYEGTVLK…EKGRVRLSAK (69 aa)).

Belongs to the polyribonucleotide nucleotidyltransferase family. Mg(2+) is required as a cofactor.

It is found in the cytoplasm. It catalyses the reaction RNA(n+1) + phosphate = RNA(n) + a ribonucleoside 5'-diphosphate. In terms of biological role, involved in mRNA degradation. Catalyzes the phosphorolysis of single-stranded polyribonucleotides processively in the 3'- to 5'-direction. This is Polyribonucleotide nucleotidyltransferase from Paraburkholderia phytofirmans (strain DSM 17436 / LMG 22146 / PsJN) (Burkholderia phytofirmans).